The primary structure comprises 84 residues: Anaphase-promoting complex subunit 11 (84 aa).

The segment at 34 to 77 (CPDCKLPGDDCPLIWGACNHAFHLHCILKWVNSQTSQAHCPMCR) adopts an RING-type; atypical zinc-finger fold.

It belongs to the RING-box family. In terms of assembly, part of the APC/C complex composed of at least 10 subunits. Interacts with APC2.

It is found in the cytoplasm. The protein localises to the nucleus. It functions in the pathway protein modification; protein ubiquitination. Its function is as follows. Component of the anaphase promoting complex/cyclosome (APC/C), a cell cycle-regulated E3 ubiquitin-protein ligase complex that controls progression through mitosis and the G1 phase of the cell cycle. The APC/C complex controls several key steps in the cell cycle by mediating ubiquitination and subsequent degradation of target proteins such as cyclins. The APC/C complex is required for the female gametophyte development and is involved in several aspect of development by controlling cell division and cell elongation. Involved in the control of endoreduplication. May recruit the E2 ubiquitin-conjugating enzymes to the complex. The polypeptide is Anaphase-promoting complex subunit 11 (Arabidopsis thaliana (Mouse-ear cress)).